We begin with the raw amino-acid sequence, 252 residues long: 3-dehydroquinate dehydratase (252 aa).

Residues Ser-21, 46-48 (EWR), and Arg-82 contribute to the 3-dehydroquinate site. Catalysis depends on His-143, which acts as the Proton donor/acceptor. Residue Lys-170 is the Schiff-base intermediate with substrate of the active site. 3 residues coordinate 3-dehydroquinate: Arg-213, Ser-232, and Gln-236.

Belongs to the type-I 3-dehydroquinase family. In terms of assembly, homodimer.

The enzyme catalyses 3-dehydroquinate = 3-dehydroshikimate + H2O. The protein operates within metabolic intermediate biosynthesis; chorismate biosynthesis; chorismate from D-erythrose 4-phosphate and phosphoenolpyruvate: step 3/7. Functionally, involved in the third step of the chorismate pathway, which leads to the biosynthesis of aromatic amino acids. Catalyzes the cis-dehydration of 3-dehydroquinate (DHQ) and introduces the first double bond of the aromatic ring to yield 3-dehydroshikimate. In Shigella dysenteriae serotype 1 (strain Sd197), this protein is 3-dehydroquinate dehydratase.